A 288-amino-acid chain; its full sequence is Release factor glutamine methyltransferase (288 aa).

S-adenosyl-L-methionine contacts are provided by residues 123 to 127, Asp146, and Asn190; that span reads GTGSG. Substrate is bound at residue 190 to 193; sequence NPPY.

This sequence belongs to the protein N5-glutamine methyltransferase family. PrmC subfamily.

It carries out the reaction L-glutaminyl-[peptide chain release factor] + S-adenosyl-L-methionine = N(5)-methyl-L-glutaminyl-[peptide chain release factor] + S-adenosyl-L-homocysteine + H(+). Its function is as follows. Methylates the class 1 translation termination release factors RF1/PrfA and RF2/PrfB on the glutamine residue of the universally conserved GGQ motif. This chain is Release factor glutamine methyltransferase, found in Bacillus subtilis (strain 168).